The chain runs to 187 residues: Elongation factor P (187 aa).

It belongs to the elongation factor P family.

Its subcellular location is the cytoplasm. It functions in the pathway protein biosynthesis; polypeptide chain elongation. Functionally, involved in peptide bond synthesis. Stimulates efficient translation and peptide-bond synthesis on native or reconstituted 70S ribosomes in vitro. Probably functions indirectly by altering the affinity of the ribosome for aminoacyl-tRNA, thus increasing their reactivity as acceptors for peptidyl transferase. In Synechocystis sp. (strain ATCC 27184 / PCC 6803 / Kazusa), this protein is Elongation factor P (efp).